An 815-amino-acid polypeptide reads, in one-letter code: Dual specificity tyrosine-phosphorylation-regulated kinase mbk-2 (815 aa).

4 disordered regions span residues 1 to 49 (MAAL…NYTR), 67 to 146 (PSSF…PLGT), 185 to 204 (YEFPSGQAQQQRRLGGSQQH), and 298 to 395 (ALPS…FRPE). Composition is skewed to polar residues over residues 7 to 25 (FTRNSRSYGQQPIDVTQQG) and 40 to 49 (SKMSNINYTR). The span at 68–78 (SSFSGASSSSS) shows a compositional bias: low complexity. Composition is skewed to polar residues over residues 119–140 (SGNTLTRSYHQPSSTNSSTSNL) and 190–204 (GQAQQQRRLGGSQQH). The segment covering 301–316 (SVGTSSSNGSSNSSSG) has biased composition (low complexity). Over residues 325 to 351 (LMTQSIGGPNKHLSASHSTLNTASTHD) the composition is skewed to polar residues. Ser361 bears the Phosphoserine; by cdk-1 mark. Over residues 363–391 (SNESLSRSHTSSSGGSQGGHNSNSGSNSG) the composition is skewed to low complexity. Residues 460-773 (YEVLKVIGKG…PAQALKHKWL (314 aa)) enclose the Protein kinase domain. Residues 466-474 (IGKGSFGQV) and Lys489 contribute to the ATP site. Residue Asp586 is the Proton acceptor of the active site. Position 620 is a phosphotyrosine; by autocatalysis (Tyr620).

Belongs to the protein kinase superfamily. CMGC Ser/Thr protein kinase family. MNB/DYRK subfamily. Part of a complex, consisting of pseudophosphatases egg-3, egg-4, egg-5 and kinase mbk-2. Interacts (via Tyr-618 and Tyr-620) with egg-4 (via tyrosine-protein phosphatase domain) and egg-5 (via tyrosine-protein phosphatase domain); mbk-2 tyrosine phosphorylation enhances the interaction. The interaction inhibits mbk-2 kinase activity and is required for mbk-2 oocyte cortex localization. Interacts (via N-terminus) with egg-3 (via tyrosine-protein phosphatase domain); the interaction does not affect mbk-2 kinase activity, is enhanced by mbk-2 tyrosine phosphorylation status and requires prior binding of mbk-2 to egg-4 and egg-5. The cofactor is Mg(2+). In terms of processing, autophosphorylated.

Its subcellular location is the cytoplasm. It is found in the cell cortex. The catalysed reaction is L-seryl-[protein] + ATP = O-phospho-L-seryl-[protein] + ADP + H(+). The enzyme catalyses L-threonyl-[protein] + ATP = O-phospho-L-threonyl-[protein] + ADP + H(+). It carries out the reaction L-tyrosyl-[protein] + ATP = O-phospho-L-tyrosyl-[protein] + ADP + H(+). Its activity is regulated as follows. Activated during oocyte maturation by phosphorylation on Ser-361 by cdk-1. The pseudotyrosine phosphatases egg-4 and egg-5 sequester activated mbk-2 until the meiotic divisions and inhibit mbk-2 kinase activity directly, using a mixed-inhibition mechanism that does not involve tyrosine dephosphorylation. Its function is as follows. Required for oocyte-to-zygote transition in which it phosphorylates oocyte proteins, including mei-1, oma-1, oma-2, mex-5, and mex-6, modifying their activity and/or stability following meiosis. Through phosphorylation of P granule components including meg-1, promotes the disassembly of zygotic P granules in the anterior cytoplasm during zygote polarization, and thus plays a role in P granule distribution and segregation in early stage embryos following meiosis. Functions in both spindle positioning and in the posterior localization of cytoplasmic determinants, including pie-1, pos-1, and pgl-1, in early embryos. Involved in the asymmetric distribution of plk-1 at the 2-cell embryonic stage. This Caenorhabditis briggsae protein is Dual specificity tyrosine-phosphorylation-regulated kinase mbk-2.